The following is a 602-amino-acid chain: Aspartate--tRNA(Asp/Asn) ligase (602 aa).

Glu-191 is a binding site for L-aspartate. The aspartate stretch occupies residues 215–218 (QLYK). Residue Arg-237 coordinates L-aspartate. Residues 237 to 239 (RDE) and Gln-246 each bind ATP. His-465 contacts L-aspartate. An ATP-binding site is contributed by Glu-499. Position 506 (Arg-506) interacts with L-aspartate. 551–554 (GLDR) serves as a coordination point for ATP.

Belongs to the class-II aminoacyl-tRNA synthetase family. Type 1 subfamily. In terms of assembly, homodimer.

Its subcellular location is the cytoplasm. The enzyme catalyses tRNA(Asx) + L-aspartate + ATP = L-aspartyl-tRNA(Asx) + AMP + diphosphate. Its function is as follows. Aspartyl-tRNA synthetase with relaxed tRNA specificity since it is able to aspartylate not only its cognate tRNA(Asp) but also tRNA(Asn). Reaction proceeds in two steps: L-aspartate is first activated by ATP to form Asp-AMP and then transferred to the acceptor end of tRNA(Asp/Asn). In Treponema pallidum (strain Nichols), this protein is Aspartate--tRNA(Asp/Asn) ligase.